The sequence spans 228 residues: Cytidylate kinase (228 aa).

An ATP-binding site is contributed by 17 to 25 (GPSASGKGT).

This sequence belongs to the cytidylate kinase family. Type 1 subfamily.

The protein resides in the cytoplasm. The enzyme catalyses CMP + ATP = CDP + ADP. It catalyses the reaction dCMP + ATP = dCDP + ADP. The polypeptide is Cytidylate kinase (Paraburkholderia phytofirmans (strain DSM 17436 / LMG 22146 / PsJN) (Burkholderia phytofirmans)).